The following is a 450-amino-acid chain: Signal recognition particle 54 kDa protein (450 aa).

Residues 107 to 114 (GIQGSGKT), 188 to 192 (DTAGR), and 247 to 250 (TKLD) each bind GTP.

The protein belongs to the GTP-binding SRP family. SRP54 subfamily. As to quaternary structure, part of the signal recognition particle protein translocation system, which is composed of SRP and FtsY. Archaeal SRP consists of a 7S RNA molecule of 300 nucleotides and two protein subunits: SRP54 and SRP19.

Its subcellular location is the cytoplasm. It catalyses the reaction GTP + H2O = GDP + phosphate + H(+). Involved in targeting and insertion of nascent membrane proteins into the cytoplasmic membrane. Binds to the hydrophobic signal sequence of the ribosome-nascent chain (RNC) as it emerges from the ribosomes. The SRP-RNC complex is then targeted to the cytoplasmic membrane where it interacts with the SRP receptor FtsY. The sequence is that of Signal recognition particle 54 kDa protein from Methanococcus maripaludis (strain DSM 14266 / JCM 13030 / NBRC 101832 / S2 / LL).